The following is a 134-amino-acid chain: Large ribosomal subunit protein eL14y (134 aa).

This sequence belongs to the eukaryotic ribosomal protein eL14 family.

The sequence is that of Large ribosomal subunit protein eL14y (RPL14B) from Arabidopsis thaliana (Mouse-ear cress).